Here is a 370-residue protein sequence, read N- to C-terminus: MPDSTFLDSTELVLNMGPQHPSTHGVLRVILKLDGEKVLGTDCIIGYLHRGVEKIAENRTYAQFNPYVDRMDYVAAVSNGLGYCLAIEKLLNVEAPPRAQCIRVILTELNRIASHLLWLGTHALDIGAITPVFYCLREREEALKIFEKYCGARLTTHAFRIGGLLYETYDGFEQEIRDFCKMFIPKVDEYEELLTNNRIWVGRLKDVGILSADECKEFGVTGPVLRAAGVKWDLRKAQPYSGYEKYDFEIPTRVNGDTYDRYIVRMEEMRQSVRIMQQAVDGIPEGPIMGKVGKVIKPPIGEAYVSIEAPKGELGYYAVSDGSTQPYRIRVRPPSFVNLQALDRMIRGGLIADVVAVIGTLDIVLGEIDR.

Belongs to the complex I 49 kDa subunit family. As to quaternary structure, NDH-1 is composed of 14 different subunits. Subunits NuoB, C, D, E, F, and G constitute the peripheral sector of the complex.

The protein localises to the cell inner membrane. It carries out the reaction a quinone + NADH + 5 H(+)(in) = a quinol + NAD(+) + 4 H(+)(out). NDH-1 shuttles electrons from NADH, via FMN and iron-sulfur (Fe-S) centers, to quinones in the respiratory chain. The immediate electron acceptor for the enzyme in this species is believed to be ubiquinone. Couples the redox reaction to proton translocation (for every two electrons transferred, four hydrogen ions are translocated across the cytoplasmic membrane), and thus conserves the redox energy in a proton gradient. The chain is NADH-quinone oxidoreductase subunit D 2 from Solibacter usitatus (strain Ellin6076).